A 431-amino-acid polypeptide reads, in one-letter code: MAEIVDVRAREVLDSRGNPTVEADVVLKSGVVGSACAPSGASTGSREALELRDKDPARYMGKGVLKAVDAVNTSIRSALIGRDAREQRELDRIMIDLDGTENKANLGANAILAVSLAAAKAAAQEKGVPLYAHIADINGTSGQYSMPVPMMNILNGGEHADNNVDIQEFMVQPVGVASFREALRVGAEIFHNLKKVLHDKGLNTAVGDEGGFAPNLPSNEAALAAIEEAVTKAGYKLGSDVTLALDCASSEFYKDGQYNLSGEGKVFSSEEFADYLGDLSQRYPIVSIEDGMDESDWDGWAALTRKLGDKVQLVGDDLFVTNTKILKQGIDKGIANSILIKFNQIGSLSETLDAIKMAKDAGFTAVISHRSGETEDTTIADLAVATSAGQIKTGSLCRSDRVAKYNRLLRIEEELAGSAPYRGLKEIKGQE.

Residue Gln-167 participates in (2R)-2-phosphoglycerate binding. Glu-209 acts as the Proton donor in catalysis. Residues Asp-246, Glu-289, and Asp-316 each coordinate Mg(2+). 4 residues coordinate (2R)-2-phosphoglycerate: Lys-341, Arg-370, Ser-371, and Lys-392. Lys-341 acts as the Proton acceptor in catalysis.

Belongs to the enolase family. In terms of assembly, component of the RNA degradosome, a multiprotein complex involved in RNA processing and mRNA degradation. Mg(2+) serves as cofactor.

It is found in the cytoplasm. Its subcellular location is the secreted. The protein localises to the cell surface. It carries out the reaction (2R)-2-phosphoglycerate = phosphoenolpyruvate + H2O. Its pathway is carbohydrate degradation; glycolysis; pyruvate from D-glyceraldehyde 3-phosphate: step 4/5. Its function is as follows. Catalyzes the reversible conversion of 2-phosphoglycerate (2-PG) into phosphoenolpyruvate (PEP). It is essential for the degradation of carbohydrates via glycolysis. This chain is Enolase, found in Hahella chejuensis (strain KCTC 2396).